The following is a 152-amino-acid chain: Lipoprotein signal peptidase (152 aa).

The next 2 helical transmembrane spans lie at 55–75 (NKMW…VFYM) and 85–105 (LGIS…DRVF). Catalysis depends on residues D111 and D129. The chain crosses the membrane as a helical span at residues 124–144 (VFNIADSALCIGVVLIIIQTL).

This sequence belongs to the peptidase A8 family.

The protein resides in the cell membrane. It carries out the reaction Release of signal peptides from bacterial membrane prolipoproteins. Hydrolyzes -Xaa-Yaa-Zaa-|-(S,diacylglyceryl)Cys-, in which Xaa is hydrophobic (preferably Leu), and Yaa (Ala or Ser) and Zaa (Gly or Ala) have small, neutral side chains.. It participates in protein modification; lipoprotein biosynthesis (signal peptide cleavage). Its function is as follows. This protein specifically catalyzes the removal of signal peptides from prolipoproteins. This is Lipoprotein signal peptidase from Bacillus cereus (strain AH187).